The sequence spans 4246 residues: Intermembrane lipid transfer protein vps13F (4246 aa).

Residues Phe2–Leu113 enclose the Chorein N-terminal domain. Disordered regions lie at residues Ile141–Asp271, Pro401–Lys420, Lys591–Gly759, Val914–Leu944, Lys964–Glu1014, Gln1217–Pro1251, Ile1356–Asp1379, Tyr1395–Lys1436, Arg1622–Ser1683, Leu2101–Gln2131, His2211–Lys2237, Gln2471–Gln2513, Leu2704–Lys2756, Ile3421–Leu3449, Lys3611–Asn3652, and Asn3794–Glu3813. Residues Asn168–Leu201 show a composition bias toward low complexity. The segment covering Asn207 to Asp217 has biased composition (basic and acidic residues). Over residues Thr218–Asp271 the composition is skewed to acidic residues. Composition is skewed to low complexity over residues Pro401–Pro413 and Gln597–Thr658. Residues Asp659–Gly668 are compositionally biased toward basic and acidic residues. The span at Asp669–Asp680 shows a compositional bias: low complexity. Over residues Asn681–Asn702 the composition is skewed to basic and acidic residues. Low complexity-rich tracts occupy residues Ser725 to Gln747 and Val914 to Pro924. Basic and acidic residues-rich tracts occupy residues Ser925–Leu944 and Asp987–Ser1001. Positions Gln1217 to Asn1241 are enriched in low complexity. Residues Ser1400–Asn1409 show a composition bias toward acidic residues. Basic and acidic residues-rich tracts occupy residues Asp1410–Lys1431 and Arg1622–Asn1634. Low complexity predominate over residues Gln1644–Gln1670. Low complexity-rich tracts occupy residues Gln2471–Asn2506, Ser2705–Thr2755, Asp3430–Leu3449, Leu3613–Asn3652, and Asn3794–Asn3809.

The protein belongs to the VPS13 family.

Its subcellular location is the membrane. Its function is as follows. Mediates the transfer of lipids between membranes at organelle contact sites. This Dictyostelium discoideum (Social amoeba) protein is Intermembrane lipid transfer protein vps13F (vps13F).